A 620-amino-acid polypeptide reads, in one-letter code: Ion-translocating oxidoreductase complex subunit C (620 aa).

4Fe-4S ferredoxin-type domains lie at 366–397 and 407–436; these read TEMG…QQLY and KARN…VQYY. Positions 377, 380, 383, 387, 416, 419, 422, and 426 each coordinate [4Fe-4S] cluster.

The protein belongs to the 4Fe4S bacterial-type ferredoxin family. RnfC subfamily. In terms of assembly, the complex is composed of six subunits: RnfA, RnfB, RnfC, RnfD, RnfE and RnfG. The cofactor is [4Fe-4S] cluster.

It is found in the cell inner membrane. Its function is as follows. Part of a membrane-bound complex that couples electron transfer with translocation of ions across the membrane. This is Ion-translocating oxidoreductase complex subunit C from Yersinia pestis bv. Antiqua (strain Antiqua).